We begin with the raw amino-acid sequence, 85 residues long: UPF0213 protein NP_0776A (85 aa).

The region spanning 3 to 78 (ADHYVYVLSC…KSLSRAKKER (76 aa)) is the GIY-YIG domain. Over residues 58-70 (KSAAMQREHEIKS) the composition is skewed to basic and acidic residues. The interval 58-85 (KSAAMQREHEIKSLSRAKKERLVADETG) is disordered.

The protein belongs to the UPF0213 family.

In Natronomonas pharaonis (strain ATCC 35678 / DSM 2160 / CIP 103997 / JCM 8858 / NBRC 14720 / NCIMB 2260 / Gabara) (Halobacterium pharaonis), this protein is UPF0213 protein NP_0776A.